Here is a 439-residue protein sequence, read N- to C-terminus: D-inositol 3-phosphate glycosyltransferase (439 aa).

Histidine 21 provides a ligand contact to 1D-myo-inositol 3-phosphate. Residues 27 to 28 (QP) and glycine 35 each bind UDP-N-acetyl-alpha-D-glucosamine. Residues 32–37 (DAGGMN), lysine 90, tyrosine 123, threonine 147, and arginine 167 contribute to the 1D-myo-inositol 3-phosphate site. The UDP-N-acetyl-alpha-D-glucosamine site is built by arginine 241, lysine 246, and glutamine 299. Tyrosine 308, arginine 309, and alanine 311 together coordinate Mg(2+). Glutamate 321 and glutamate 329 together coordinate UDP-N-acetyl-alpha-D-glucosamine. Threonine 335 is a binding site for Mg(2+).

The protein belongs to the glycosyltransferase group 1 family. MshA subfamily. As to quaternary structure, homodimer.

It catalyses the reaction 1D-myo-inositol 3-phosphate + UDP-N-acetyl-alpha-D-glucosamine = 1D-myo-inositol 2-acetamido-2-deoxy-alpha-D-glucopyranoside 3-phosphate + UDP + H(+). In terms of biological role, catalyzes the transfer of a N-acetyl-glucosamine moiety to 1D-myo-inositol 3-phosphate to produce 1D-myo-inositol 2-acetamido-2-deoxy-glucopyranoside 3-phosphate in the mycothiol biosynthesis pathway. The sequence is that of D-inositol 3-phosphate glycosyltransferase from Mycobacterium sp. (strain JLS).